The chain runs to 473 residues: MSRLVVVSNRIAPPDNKGGAGGLAVGVLGALKAAGGLWFGWSGETGNEDEPLKKVTKGNITWASFNLSEQDYEDYYCQFSNAVLWPAFHYRLDLVQFQRPAWEGYMRVNALLADKLLPLIKENDIIWVHDYHLLPFASELRKRGVNNRIGFFLHIPFPTPEIFNALPPHDELLEQLCDFDLLGFQTENDRLAFLDSLSSQTRVTTRSGKHHIAWGKDFQTEVYPIGIEPDEIALQAAGPLPPKLVQLKAELKNVKNIFSVERLDYSKGLPERFLAYEALLENYPQHRGKIRYTQIAPTSRGEVQAYQDIRHQLETEAGRINGRYGQLGWTPLYYLNQHFDRKLLMKIFRYSDVGLVTPLRDGMNLVAKEFVAAQDPANPGVLVLSQFAGAANELTSALIVNPYDRDDVAAALNRALTMPLAERISRHAEMLDVIVKNDINRWQERFIHDLKEVTPRSAERRQQNNVATFPKLA.

R10 contacts D-glucose 6-phosphate. 21-22 contacts UDP-alpha-D-glucose; sequence GG. Residues Y76 and D130 each contribute to the D-glucose 6-phosphate site. 2 residues coordinate UDP-alpha-D-glucose: R262 and K267. Position 300 (R300) interacts with D-glucose 6-phosphate. UDP-alpha-D-glucose-binding positions include F339 and 365–369; that span reads LVAKE.

Belongs to the glycosyltransferase 20 family. As to quaternary structure, homotetramer.

It carries out the reaction D-glucose 6-phosphate + UDP-alpha-D-glucose = alpha,alpha-trehalose 6-phosphate + UDP + H(+). The protein operates within glycan biosynthesis; trehalose biosynthesis. Probably involved in the osmoprotection via the biosynthesis of trehalose. Catalyzes the transfer of glucose from UDP-alpha-D-glucose (UDP-Glc) to D-glucose 6-phosphate (Glc-6-P) to form trehalose-6-phosphate. Acts with retention of the anomeric configuration of the UDP-sugar donor. The protein is Trehalose-6-phosphate synthase (otsA) of Salmonella arizonae (strain ATCC BAA-731 / CDC346-86 / RSK2980).